The primary structure comprises 346 residues: Lipase chaperone (346 aa).

Residues 10 to 30 form a helical membrane-spanning segment; it reads TIVFGVITSVLLLLLLIYYVF.

The protein belongs to the lipase chaperone family.

The protein resides in the cell inner membrane. May be involved in the folding of the extracellular lipase during its passage through the periplasm. This is Lipase chaperone (lifO) from Acinetobacter venetianus (strain ATCC 31012 / DSM 23050 / BCRC 14357 / CCUG 45561 / CIP 110063 / KCTC 2702 / LMG 19082 / RAG-1).